A 423-amino-acid polypeptide reads, in one-letter code: uncharacterized protein (423 aa).

Positions 51, 138, and 150 each coordinate substrate. ATP is bound by residues 170-171 (TD) and 214-220 (TGGMRTK). One can recognise a PUA domain in the interval 315–406 (KGAIIIDENS…EKIHDVLGYS (92 aa)).

Belongs to the glutamate 5-kinase family.

Its subcellular location is the cytoplasm. This is an uncharacterized protein from Saccharomyces cerevisiae (strain ATCC 204508 / S288c) (Baker's yeast).